Here is a 1489-residue protein sequence, read N- to C-terminus: Chromosome partition protein MukB (1489 aa).

34–41 (GGNGAGKS) contacts ATP. 7 coiled-coil regions span residues 326 to 418 (LEAD…QYNQ), 444 to 472 (LETF…QTAH), 509 to 602 (RHLA…QRAP), 780 to 805 (RAAR…ATLS), 835 to 919 (EAEI…GNQL), 977 to 1116 (EMLS…AKAG), and 1209 to 1266 (VEAI…QNVS). Residues 666 to 783 (PGGSEDSRLN…TVPIFGRAAR (118 aa)) are flexible hinge.

This sequence belongs to the SMC family. MukB subfamily. As to quaternary structure, homodimerization via its hinge domain. Binds to DNA via its C-terminal region. Interacts, and probably forms a ternary complex, with MukE and MukF via its C-terminal region. The complex formation is stimulated by calcium or magnesium. Interacts with tubulin-related protein FtsZ.

The protein resides in the cytoplasm. It is found in the nucleoid. Plays a central role in chromosome condensation, segregation and cell cycle progression. Functions as a homodimer, which is essential for chromosome partition. Involved in negative DNA supercoiling in vivo, and by this means organize and compact chromosomes. May achieve or facilitate chromosome segregation by condensation DNA from both sides of a centrally located replisome during cell division. The polypeptide is Chromosome partition protein MukB (Citrobacter koseri (strain ATCC BAA-895 / CDC 4225-83 / SGSC4696)).